Reading from the N-terminus, the 296-residue chain is Glycine--tRNA ligase alpha subunit (296 aa).

The protein belongs to the class-II aminoacyl-tRNA synthetase family. In terms of assembly, tetramer of two alpha and two beta subunits.

The protein localises to the cytoplasm. It carries out the reaction tRNA(Gly) + glycine + ATP = glycyl-tRNA(Gly) + AMP + diphosphate. This Polynucleobacter necessarius subsp. necessarius (strain STIR1) protein is Glycine--tRNA ligase alpha subunit.